Here is a 370-residue protein sequence, read N- to C-terminus: MFQPEKHGLEPDFQLTKFTTHTGUSCKIPQKVLEKYLRGTEIENKNNDGYLIGSGMDCAVIPLKRHKDYLLIQTVDFFYPMVNDPELLGRIALANVLSDVYAVGVTQFDTVEMIVSTSTSFSEKERDVVIGLVMKGFQNSLKANGYRNTPLIIRQLKINPWCIIGGIATSVCRSEEIILPSNAQPGDVLVLTKPLGGQMAMDAHLWQLNQTEKYKKLLSECSDADIKETFEIAVKSMTYLNKNAALLMHKYQAHCATDITGFGLLGHANNLAQFQKEKVLFQINKLPIIKNVLKFSTLVGQSTKFRSGRSVETSGGLLICLPADAADKFCRDFEEATNGEQKSFQIGHVTAANESDAVLCEDVEFIEVSL.

The active site involves U24. A non-standard amino acid (selenocysteine) is located at residue U24. ATP-binding positions include K27, 55-57 (GMD), D76, and D99. A Mg(2+)-binding site is contributed by D57. Mg(2+)-binding residues include D99 and D258.

The protein belongs to the selenophosphate synthase 1 family. Class I subfamily. As to quaternary structure, homodimer. The cofactor is Mg(2+). As to expression, first expressed in the midgut anlagen with subsequent expression in a variety of tissues including the gut and nervous system.

It catalyses the reaction hydrogenselenide + ATP + H2O = selenophosphate + AMP + phosphate + 2 H(+). In terms of biological role, synthesizes selenophosphate from selenide and ATP. This Drosophila melanogaster (Fruit fly) protein is Selenide, water dikinase 2 (Sps2).